The primary structure comprises 368 residues: Chaperone protein DnaJ (368 aa).

One can recognise a J domain in the interval 5–69 (DYYEVLGLDK…QKRAQYDRFG (65 aa)). The CR-type zinc-finger motif lies at 126 to 208 (GKTETIELEI…CHGSGHVKKK (83 aa)). Residues Cys-139, Cys-142, Cys-156, Cys-159, Cys-182, Cys-185, Cys-196, and Cys-199 each contribute to the Zn(2+) site. CXXCXGXG motif repeat units follow at residues 139–146 (CDTCMGSG), 156–163 (CNRCGGSG), 182–189 (CSQCHGSG), and 196–203 (CPTCHGSG).

Belongs to the DnaJ family. Homodimer. It depends on Zn(2+) as a cofactor.

It is found in the cytoplasm. Functionally, participates actively in the response to hyperosmotic and heat shock by preventing the aggregation of stress-denatured proteins and by disaggregating proteins, also in an autonomous, DnaK-independent fashion. Unfolded proteins bind initially to DnaJ; upon interaction with the DnaJ-bound protein, DnaK hydrolyzes its bound ATP, resulting in the formation of a stable complex. GrpE releases ADP from DnaK; ATP binding to DnaK triggers the release of the substrate protein, thus completing the reaction cycle. Several rounds of ATP-dependent interactions between DnaJ, DnaK and GrpE are required for fully efficient folding. Also involved, together with DnaK and GrpE, in the DNA replication of plasmids through activation of initiation proteins. In Exiguobacterium sp. (strain ATCC BAA-1283 / AT1b), this protein is Chaperone protein DnaJ.